Here is a 446-residue protein sequence, read N- to C-terminus: Glutamyl-tRNA reductase 2 (446 aa).

Residues 53-56 (TCNR), Ser-105, 110-112 (EQQ), and Gln-116 contribute to the substrate site. Cys-54 functions as the Nucleophile in the catalytic mechanism. 185–190 (GAGKMG) lines the NADP(+) pocket. Positions 409–446 (AAELFGIENETAGGERREGGAEGAAAAPGAGPVRSQGT) are disordered. Positions 431 to 440 (GAAAAPGAGP) are enriched in low complexity.

Belongs to the glutamyl-tRNA reductase family. In terms of assembly, homodimer.

It catalyses the reaction (S)-4-amino-5-oxopentanoate + tRNA(Glu) + NADP(+) = L-glutamyl-tRNA(Glu) + NADPH + H(+). The protein operates within porphyrin-containing compound metabolism; protoporphyrin-IX biosynthesis; 5-aminolevulinate from L-glutamyl-tRNA(Glu): step 1/2. In terms of biological role, catalyzes the NADPH-dependent reduction of glutamyl-tRNA(Glu) to glutamate 1-semialdehyde (GSA). The polypeptide is Glutamyl-tRNA reductase 2 (Anaeromyxobacter dehalogenans (strain 2CP-C)).